A 211-amino-acid polypeptide reads, in one-letter code: Prolactin-3C1 (211 aa).

The first 29 residues, 1–29 (MQLSLTQARTWKGLLLLVSCMILWISVTP), serve as a signal peptide directing secretion. N-linked (GlcNAc...) asparagine glycosylation is found at asparagine 77 and asparagine 173. An intrachain disulfide couples cysteine 80 to cysteine 187.

It belongs to the somatotropin/prolactin family. Expressed exclusively in decidual tissue.

It is found in the secreted. The sequence is that of Prolactin-3C1 (Prl3c1) from Rattus norvegicus (Rat).